Here is a 39-residue protein sequence, read N- to C-terminus: Photosystem II reaction center protein L (39 aa).

Residues 18–38 (SLYLGLLLIAVLGILFSSYFF) traverse the membrane as a helical segment.

The protein belongs to the PsbL family. In terms of assembly, PSII is composed of 1 copy each of membrane proteins PsbA, PsbB, PsbC, PsbD, PsbE, PsbF, PsbH, PsbI, PsbJ, PsbK, PsbL, PsbM, PsbT, PsbX, PsbY, PsbZ, Psb30/Ycf12, peripheral proteins PsbO, CyanoQ (PsbQ), PsbU, PsbV and a large number of cofactors. It forms dimeric complexes.

Its subcellular location is the cellular thylakoid membrane. Its function is as follows. One of the components of the core complex of photosystem II (PSII). PSII is a light-driven water:plastoquinone oxidoreductase that uses light energy to abstract electrons from H(2)O, generating O(2) and a proton gradient subsequently used for ATP formation. It consists of a core antenna complex that captures photons, and an electron transfer chain that converts photonic excitation into a charge separation. This subunit is found at the monomer-monomer interface and is required for correct PSII assembly and/or dimerization. In Crocosphaera subtropica (strain ATCC 51142 / BH68) (Cyanothece sp. (strain ATCC 51142)), this protein is Photosystem II reaction center protein L.